Here is a 2471-residue protein sequence, read N- to C-terminus: Histidine protein kinase 1 (2471 aa).

Residues 1–10 (MSMNFFNSSE) are compositionally biased toward polar residues. Disordered regions lie at residues 1-30 (MSMNFFNSSEPARDHKPDQEKETVMTTEHY), 52-75 (ETKKGPNLHISDLSPLESQSVPPS), and 395-415 (RQGSYSSNESRRKSSSGFNIG). Residues 11–30 (PARDHKPDQEKETVMTTEHY) are compositionally biased toward basic and acidic residues. The region spanning 358–636 (EHPSQSTDQK…DCHSLLHDLI (279 aa)) is the Protein kinase domain. A Histidine kinase domain is found at 2004–2225 (NMSHEIRTPF…TFYVSVIMDA (222 aa)). The residue at position 2007 (His-2007) is a Phosphohistidine; by autocatalysis. The 127-residue stretch at 2340 to 2466 (RILLAEDNLL…ELRRILTKVG (127 aa)) folds into the Response regulatory domain. Asp-2394 is modified (4-aspartylphosphate).

The phosphorelay mechanism involves the sequential transfer of a phosphate group from His-2007 (H1) in the histidine kinase domain (transmitter domain) to Asp-2394 (D1) of the response regulatory domain (receiver domain). This transfer probably occurs between two CHK1 molecules, rather than intramolecularly.

It carries out the reaction ATP + protein L-histidine = ADP + protein N-phospho-L-histidine.. Functionally, histidine kinase involved in a two-component signaling pathway that regulates cell wall mannan and glucan biosynthesis. Regulates quorum sensing as well as hyphal formation, biofilm formation, chlamidospore formation, and virulence. Plays a prominent role in phagocyte activation. Involved in the covering of the most potent pro-inflammatory cell wall molecules, the beta-glucans, underneath a dense mannan layer, so that the pathogen becomes partly invisible for immune cells such as phagocytes. This chain is Histidine protein kinase 1 (CHK1), found in Candida albicans (strain SC5314 / ATCC MYA-2876) (Yeast).